The chain runs to 316 residues: Glutathione synthetase (316 aa).

Residues 124-311 (NEKLAALLFP…IAGLLFDAIE (188 aa)) form the ATP-grasp domain. 151–208 (FVLAHGQAVLKPLDGMGGRSIFRSGTGDPNLNVILETLTDGGRKLTLAQRFIPDITAG) provides a ligand contact to ATP. 2 residues coordinate Mg(2+): E282 and N284.

It belongs to the prokaryotic GSH synthase family. It depends on Mg(2+) as a cofactor. Requires Mn(2+) as cofactor.

It catalyses the reaction gamma-L-glutamyl-L-cysteine + glycine + ATP = glutathione + ADP + phosphate + H(+). The protein operates within sulfur metabolism; glutathione biosynthesis; glutathione from L-cysteine and L-glutamate: step 2/2. The chain is Glutathione synthetase from Xanthomonas campestris pv. campestris (strain ATCC 33913 / DSM 3586 / NCPPB 528 / LMG 568 / P 25).